A 526-amino-acid polypeptide reads, in one-letter code: Flavonoid 3'-monooxygenase CYP75B3 (526 aa).

A helical membrane pass occupies residues 6-26 (LPLLLGSLAVSAAVWYLVYFL). Position 461 (Cys-461) interacts with heme.

This sequence belongs to the cytochrome P450 family. The cofactor is heme.

It is found in the membrane. It catalyses the reaction a 3'-unsubstituted flavone + reduced [NADPH--hemoprotein reductase] + O2 = a 3'-hydroxyflavone + oxidized [NADPH--hemoprotein reductase] + H2O + H(+). Its pathway is secondary metabolite biosynthesis; flavonoid biosynthesis. Its function is as follows. Catalyzes the 3'-hydroxylation of the flavonoid B-ring to the 3',4'-hydroxylated state. Catalyzes the 3'-hydroxylation of apigenin to generate luteolin. The chain is Flavonoid 3'-monooxygenase CYP75B3 from Oryza sativa subsp. japonica (Rice).